The chain runs to 215 residues: L-fuculose phosphate aldolase (215 aa).

Substrate is bound by residues 28-29 (GN), 43-44 (TG), and 71-72 (SS). Glutamate 73 (proton donor/acceptor) is an active-site residue. Zn(2+)-binding residues include glutamate 73, histidine 92, histidine 94, and histidine 155.

This sequence belongs to the aldolase class II family. AraD/FucA subfamily. In terms of assembly, homotetramer. The cofactor is Zn(2+).

It carries out the reaction L-fuculose 1-phosphate = (S)-lactaldehyde + dihydroxyacetone phosphate. It participates in carbohydrate degradation; L-fucose degradation; L-lactaldehyde and glycerone phosphate from L-fucose: step 3/3. Involved in the degradation of L-fucose and D-arabinose. Catalyzes the reversible cleavage of L-fuculose 1-phosphate (Fuc1P) to yield dihydroxyacetone phosphate (DHAP) and L-lactaldehyde. The protein is L-fuculose phosphate aldolase of Escherichia coli O6:H1 (strain CFT073 / ATCC 700928 / UPEC).